A 302-amino-acid chain; its full sequence is MYFYKKYLHFFFVVSKFKFFLKMQVPFGCNMKGLGVLLGLFSLILAQQLPDLPRTQHPPKRELKYWCTYVPQCDFCWDCQNGICKNKIMETQLIDSNHSIVNCRVSRNSETQTCFYEISSKMPNHFSMSCSHPTPYIGNEIFMKKVGGDYMTLLTLKQYCLYFIISIAFAGCFVYAVRKNLRLNTTIKLLTLLSILVYLAQPVLNRPLSIFYTKQFLPRTYTPPTRELDYWCTYAKHCDFCWECRKGICKNKVLDDMPPFIIQNDYINKCSIARYFDRCMYFIEPKIPYIHYMNCSLPTYYG.

The helical transmembrane segment at 26-46 threads the bilayer; that stretch reads PFGCNMKGLGVLLGLFSLILA. Residue asparagine 97 is glycosylated (N-linked (GlcNAc...) asparagine; by host). 2 helical membrane-spanning segments follow: residues 154–174 and 183–203; these read LTLK…GCFV and LNTT…AQPV. N-linked (GlcNAc...) asparagine; by host glycosylation occurs at asparagine 294.

The protein belongs to the asfivirus MGF 110 family.

The protein resides in the host membrane. In terms of biological role, plays a role in virus cell tropism, and may be required for efficient virus replication in macrophages. The polypeptide is Protein MGF 110-11L (African swine fever virus (isolate Tick/South Africa/Pretoriuskop Pr4/1996) (ASFV)).